A 496-amino-acid polypeptide reads, in one-letter code: Membrane-bound lytic murein transglycosylase F (496 aa).

An N-terminal signal peptide occupies residues methionine 1–glutamate 29. The non-LT domain stretch occupies residues lysine 30–valine 267. The LT domain stretch occupies residues aspartate 268–leucine 496. Glutamate 314 is an active-site residue. A disordered region spans residues valine 464–leucine 496. The span at alanine 486–leucine 496 shows a compositional bias: low complexity.

The protein in the N-terminal section; belongs to the bacterial solute-binding protein 3 family. It in the C-terminal section; belongs to the transglycosylase Slt family.

Its subcellular location is the cell outer membrane. The catalysed reaction is Exolytic cleavage of the (1-&gt;4)-beta-glycosidic linkage between N-acetylmuramic acid (MurNAc) and N-acetylglucosamine (GlcNAc) residues in peptidoglycan, from either the reducing or the non-reducing ends of the peptidoglycan chains, with concomitant formation of a 1,6-anhydrobond in the MurNAc residue.. Functionally, murein-degrading enzyme that degrades murein glycan strands and insoluble, high-molecular weight murein sacculi, with the concomitant formation of a 1,6-anhydromuramoyl product. Lytic transglycosylases (LTs) play an integral role in the metabolism of the peptidoglycan (PG) sacculus. Their lytic action creates space within the PG sacculus to allow for its expansion as well as for the insertion of various structures such as secretion systems and flagella. The chain is Membrane-bound lytic murein transglycosylase F from Pseudomonas savastanoi pv. phaseolicola (strain 1448A / Race 6) (Pseudomonas syringae pv. phaseolicola (strain 1448A / Race 6)).